Reading from the N-terminus, the 696-residue chain is Polyribonucleotide nucleotidyltransferase (696 aa).

Mg(2+)-binding residues include Asp489 and Asp495. Residues 556–615 (PQYVTMKINPEKIRDVIGKGGVVIREITEATNCAIDISDDGTIKIAAHTTEEGEAAKRRI) enclose the KH domain. The region spanning 625-693 (GKVYEGTVVK…RQGRVRLSMK (69 aa)) is the S1 motif domain.

It belongs to the polyribonucleotide nucleotidyltransferase family. In terms of assembly, component of the RNA degradosome, which is a multiprotein complex involved in RNA processing and mRNA degradation. Mg(2+) serves as cofactor.

Its subcellular location is the cytoplasm. It catalyses the reaction RNA(n+1) + phosphate = RNA(n) + a ribonucleoside 5'-diphosphate. In terms of biological role, involved in mRNA degradation. Catalyzes the phosphorolysis of single-stranded polyribonucleotides processively in the 3'- to 5'-direction. The sequence is that of Polyribonucleotide nucleotidyltransferase from Coxiella burnetii (strain RSA 331 / Henzerling II).